The chain runs to 205 residues: Ras-related protein Rab-1A (205 aa).

Serine 2 is subject to N-acetylserine. GTP-binding residues include serine 20, glycine 21, glycine 23, lysine 24, serine 25, cysteine 26, glutamate 38, and threonine 43. Serine 25 contributes to the Mg(2+) binding site. The Switch 1 signature appears at aspartate 34 to phenylalanine 48. Mg(2+) is bound at residue threonine 43. Glycyl lysine isopeptide (Lys-Gly) (interchain with G-Cter in ubiquitin) cross-links involve residues lysine 49 and lysine 61. Residue aspartate 66 participates in Mg(2+) binding. Residues aspartate 66–glycine 83 carry the Switch 2 motif. The GTP site is built by glycine 69, asparagine 124, lysine 125, aspartate 127, alanine 155, and lysine 156. Residues proline 178 to cysteine 205 are disordered. Serine 194 is subject to Phosphoserine; by CDK1. S-geranylgeranyl cysteine attachment occurs at residues cysteine 204 and cysteine 205.

This sequence belongs to the small GTPase superfamily. Rab family. In terms of assembly, may interact with YIPF5. Interacts with C9orf72; the interaction mediates recruitment of RAB1A to the ATG1/ULK1 kinase complex. Interacts with GDI1; this promotes dissociation from membranes. Requires Mg(2+) as cofactor. Phosphorylated by CDK1 kinase during mitosis. Post-translationally, ubiquitinated via 'Lys-11'-linked ubiquitination on Lys-49 and Lys-61; impairing the recruitment of guanosine diphosphate (GDP) dissociation inhibitor 1/GDI1.

The protein resides in the golgi apparatus. The protein localises to the endoplasmic reticulum. It is found in the early endosome. It localises to the cytoplasm. Its subcellular location is the cytosol. The protein resides in the membrane. The protein localises to the melanosome. It catalyses the reaction GTP + H2O = GDP + phosphate + H(+). Its activity is regulated as follows. Regulated by guanine nucleotide exchange factors (GEFs) which promote the exchange of bound GDP for free GTP. Regulated by GTPase activating proteins (GAPs) which increase the GTP hydrolysis activity. Inhibited by GDP dissociation inhibitors (GDIs). The small GTPases Rab are key regulators of intracellular membrane trafficking, from the formation of transport vesicles to their fusion with membranes. Rabs cycle between an inactive GDP-bound form and an active GTP-bound form that is able to recruit to membranes different sets of downstream effectors directly responsible for vesicle formation, movement, tethering and fusion. RAB1A regulates vesicular protein transport from the endoplasmic reticulum (ER) to the Golgi compartment and on to the cell surface, and plays a role in IL-8 and growth hormone secretion. Required to modulate the compacted morphology of the Golgi. Regulates the level of CASR present at the cell membrane. Plays a role in cell adhesion and cell migration, via its role in protein trafficking. Plays a role in autophagosome assembly and cellular defense reactions against pathogenic bacteria. Plays a role in microtubule-dependent protein transport by early endosomes and in anterograde melanosome transport. This Sus scrofa (Pig) protein is Ras-related protein Rab-1A (RAB1A).